Here is a 307-residue protein sequence, read N- to C-terminus: D-alanine--D-alanine ligase (307 aa).

The ATP-grasp domain occupies 101-301 (KTVMRAAGVD…FGELVRWMVE (201 aa)). Position 127–182 (127–182 (PLPPPYVVKPIAEGSSVGVIIVRDGRSHPPQILASEEWTFGEQVLAEPYIAGRELT)) interacts with ATP. Positions 251, 268, and 270 each coordinate Mg(2+).

It belongs to the D-alanine--D-alanine ligase family. The cofactor is Mg(2+). Requires Mn(2+) as cofactor.

The protein resides in the cytoplasm. It carries out the reaction 2 D-alanine + ATP = D-alanyl-D-alanine + ADP + phosphate + H(+). Its pathway is cell wall biogenesis; peptidoglycan biosynthesis. Its function is as follows. Cell wall formation. This is D-alanine--D-alanine ligase from Methylobacterium radiotolerans (strain ATCC 27329 / DSM 1819 / JCM 2831 / NBRC 15690 / NCIMB 10815 / 0-1).